We begin with the raw amino-acid sequence, 414 residues long: Esterase FrsA (414 aa).

Belongs to the FrsA family.

The catalysed reaction is a carboxylic ester + H2O = an alcohol + a carboxylate + H(+). In terms of biological role, catalyzes the hydrolysis of esters. This Salmonella dublin (strain CT_02021853) protein is Esterase FrsA.